A 994-amino-acid polypeptide reads, in one-letter code: Sarcoplasmic/endoplasmic reticulum calcium ATPase 1 (994 aa).

Topologically, residues 1 to 48 are cytoplasmic; the sequence is MEAAHSKSTEECLSYFGVSETTGLTPDQVKRHLEKYGPNELPAEEGKS. The helical transmembrane segment at 49 to 69 threads the bilayer; sequence LWELVVEQFEDLLVRILLLAA. At 70–89 the chain is on the lumenal side; that stretch reads CISFVLAWFEEGEETVTAFV. A helical membrane pass occupies residues 90 to 110; sequence EPFVILLILIANAIVGVWQER. At 111 to 253 the chain is on the cytoplasmic side; sequence NAENAIEALK…QDKTPLQQKL (143 aa). Residues 254–273 traverse the membrane as a helical segment; it reads DEFGEQLSKVISLICVAVWL. Over 274–295 the chain is Lumenal; sequence INIGHFNDPVHGGSWFRGAIYY. A helical membrane pass occupies residues 296–313; that stretch reads FKIAVALAVAAIPEGLPA. 4 residues coordinate Ca(2+): V304, A305, I307, and E309. Over 314–757 the chain is Cytoplasmic; that stretch reads VITTCLALGT…EEGRAIYNNM (444 aa). D351 acts as the 4-aspartylphosphate intermediate in catalysis. Mg(2+)-binding residues include D351 and T353. T353 is an ATP binding site. A Phosphothreonine modification is found at T441. Residues E442, R489, K515, and R560 each contribute to the ATP site. T569 bears the Phosphothreonine mark. Position 581 is a phosphoserine (S581). The ATP site is built by T625, G626, and D627. A Phosphoserine modification is found at S643. ATP contacts are provided by R678 and K684. D703 contributes to the Mg(2+) binding site. Residue N706 coordinates ATP. The helical transmembrane segment at 758-777 threads the bilayer; the sequence is KQFIRYLISSNVGEVVCIFL. Residues N768 and E771 each coordinate Ca(2+). The Lumenal segment spans residues 778–787; sequence TAALGLPEAL. The chain crosses the membrane as a helical span at residues 788–808; that stretch reads IPVQLLWVNLVTDGLPATALG. The tract at residues 788–808 is interaction with PLN; the sequence is IPVQLLWVNLVTDGLPATALG. Residues N796, T799, and D800 each contribute to the Ca(2+) site. The Cytoplasmic portion of the chain corresponds to 809-828; the sequence is FNPPDLDIMDRPPRSPKEPL. The helical transmembrane segment at 829–851 threads the bilayer; the sequence is ISGWLFFRYMAIGGYVGAATVGA. Residues 852–897 are Lumenal-facing; the sequence is AAWWFLYAEDGPHVSYHQLTHFMQCTEHNPEFDGLDCEVFEAPEPM. A disulfide bridge connects residues C876 and C888. The helical transmembrane segment at 898–917 threads the bilayer; sequence TMALSVLVTIEMCNALNSLS. Ca(2+) is bound at residue E908. The Cytoplasmic portion of the chain corresponds to 918–930; it reads ENQSLLRMPPWVN. Residues 931–949 form a helical membrane-spanning segment; that stretch reads IWLLGSICLSMSLHFLILY. The segment at 932–943 is interaction with PLN; that stretch reads WLLGSICLSMSL. At 950–964 the chain is on the lumenal side; that stretch reads VDPLPMIFKLRALDF. The chain crosses the membrane as a helical span at residues 965–985; the sequence is TQWLMVLKISLPVIGLDELLK. Residues 986-994 lie on the Cytoplasmic side of the membrane; it reads FIARNYLEG.

It belongs to the cation transport ATPase (P-type) (TC 3.A.3) family. Type IIA subfamily. Interacts with sarcolipin (SLN). Interacts with phospholamban (PLN). Interacts with myoregulin (MRLN). Interacts with DWORF. Interacts with VMP1. Mg(2+) is required as a cofactor.

Its subcellular location is the endoplasmic reticulum membrane. The protein resides in the sarcoplasmic reticulum membrane. It carries out the reaction Ca(2+)(in) + ATP + H2O = Ca(2+)(out) + ADP + phosphate + H(+). Inhibited by sarcolipin (SLN) and myoregulin (MRLN). Has also been shown to be reversibly inhibited by phospholamban (PLN) at low calcium concentrations in vitro. Dephosphorylated PLN decreases the apparent affinity of the ATPase for calcium in vitro and this inhibition is regulated by the phosphorylation of PLN. Enhanced by DWORF; DWORF increases activity by displacing sarcolipin (SLN), phospholamban (PLN) and myoregulin (MRLN). Functionally, key regulator of striated muscle performance by acting as the major Ca(2+) ATPase responsible for the reuptake of cytosolic Ca(2+) into the sarcoplasmic reticulum. Catalyzes the hydrolysis of ATP coupled with the translocation of calcium from the cytosol to the sarcoplasmic reticulum lumen. Contributes to calcium sequestration involved in muscular excitation/contraction. This Mus musculus (Mouse) protein is Sarcoplasmic/endoplasmic reticulum calcium ATPase 1 (Atp2a1).